A 302-amino-acid chain; its full sequence is Phosphoribosylaminoimidazole-succinocarboxamide synthase (302 aa).

This sequence belongs to the SAICAR synthetase family.

It carries out the reaction 5-amino-1-(5-phospho-D-ribosyl)imidazole-4-carboxylate + L-aspartate + ATP = (2S)-2-[5-amino-1-(5-phospho-beta-D-ribosyl)imidazole-4-carboxamido]succinate + ADP + phosphate + 2 H(+). It functions in the pathway purine metabolism; IMP biosynthesis via de novo pathway; 5-amino-1-(5-phospho-D-ribosyl)imidazole-4-carboxamide from 5-amino-1-(5-phospho-D-ribosyl)imidazole-4-carboxylate: step 1/2. In Cupriavidus necator (strain ATCC 17699 / DSM 428 / KCTC 22496 / NCIMB 10442 / H16 / Stanier 337) (Ralstonia eutropha), this protein is Phosphoribosylaminoimidazole-succinocarboxamide synthase.